A 565-amino-acid chain; its full sequence is NAD-dependent malic enzyme (565 aa).

Tyr104 (proton donor) is an active-site residue. Arg157 contacts NAD(+). Lys175 acts as the Proton acceptor in catalysis. Residues Glu246, Asp247, and Asp270 each coordinate a divalent metal cation. Residues Asp270 and Asn418 each coordinate NAD(+).

It belongs to the malic enzymes family. Homotetramer. Requires Mg(2+) as cofactor. Mn(2+) serves as cofactor.

It carries out the reaction (S)-malate + NAD(+) = pyruvate + CO2 + NADH. It catalyses the reaction oxaloacetate + H(+) = pyruvate + CO2. The chain is NAD-dependent malic enzyme from Pectobacterium carotovorum subsp. carotovorum (strain PC1).